The chain runs to 56 residues: 4Fe-4S ferredoxin FdxA (56 aa).

4Fe-4S ferredoxin-type domains lie at M1–D28 and D29–A56. 8 residues coordinate [4Fe-4S] cluster: C9, C12, C15, C19, C38, C41, C44, and C48.

[4Fe-4S] cluster is required as a cofactor.

Functionally, ferredoxins are iron-sulfur proteins that transfer electrons in a wide variety of metabolic reactions. The polypeptide is 4Fe-4S ferredoxin FdxA (Gottschalkia acidurici (strain ATCC 7906 / DSM 604 / BCRC 14475 / CIP 104303 / KCTC 5404 / NCIMB 10678 / 9a) (Clostridium acidurici)).